We begin with the raw amino-acid sequence, 174 residues long: RNA pyrophosphohydrolase (174 aa).

The Nudix hydrolase domain maps to 6–149; that stretch reads GYRPNVGIIL…KRDVYLGALK (144 aa). The Nudix box signature appears at 38 to 59; the sequence is GGIKPGESPETAMYRELYEEVG.

It belongs to the Nudix hydrolase family. RppH subfamily. A divalent metal cation serves as cofactor.

In terms of biological role, accelerates the degradation of transcripts by removing pyrophosphate from the 5'-end of triphosphorylated RNA, leading to a more labile monophosphorylated state that can stimulate subsequent ribonuclease cleavage. This is RNA pyrophosphohydrolase from Neisseria meningitidis serogroup C (strain 053442).